A 413-amino-acid polypeptide reads, in one-letter code: 2,3-bisphosphoglycerate-independent phosphoglycerate mutase (413 aa).

It belongs to the BPG-independent phosphoglycerate mutase family. A-PGAM subfamily.

The catalysed reaction is (2R)-2-phosphoglycerate = (2R)-3-phosphoglycerate. The protein operates within carbohydrate degradation; glycolysis; pyruvate from D-glyceraldehyde 3-phosphate: step 3/5. Functionally, catalyzes the interconversion of 2-phosphoglycerate and 3-phosphoglycerate. The chain is 2,3-bisphosphoglycerate-independent phosphoglycerate mutase from Sulfurisphaera tokodaii (strain DSM 16993 / JCM 10545 / NBRC 100140 / 7) (Sulfolobus tokodaii).